Reading from the N-terminus, the 313-residue chain is Carbamate kinase (313 aa).

It belongs to the carbamate kinase family.

It is found in the cytoplasm. The catalysed reaction is hydrogencarbonate + NH4(+) + ATP = carbamoyl phosphate + ADP + H2O + H(+). The protein operates within metabolic intermediate metabolism; carbamoyl phosphate degradation; CO(2) and NH(3) from carbamoyl phosphate: step 1/1. The protein is Carbamate kinase (arcC) of Oenococcus oeni (Leuconostoc oenos).